The following is a 244-amino-acid chain: UL16-binding protein 1 (244 aa).

Positions 1–25 (MAAAASPAFLLCLPLLHLLSGWSRA) are cleaved as a signal peptide. The segment at 26–117 (GWVDTHCLCY…IQVENLIPIE (92 aa)) is MHC class I alpha-1 like. A disulfide bridge links Cys50 with Cys66. The N-linked (GlcNAc...) asparagine glycan is linked to Asn82. An MHC class I alpha-2 like region spans residues 118–208 (PLTLQARMSC…MYWEQMLDPT (91 aa)). Cysteines 127 and 190 form a disulfide. Residue Gly216 is the site of GPI-anchor amidated glycine attachment. Positions 217 to 244 (TTQPKAMATTLSPWSLLIIFLCFILAGR) are cleaved as a propeptide — removed in mature form.

The protein belongs to the MHC class I family. In terms of assembly, interacts with KLRK1/NKG2D. Does not bind to beta2-microglobulin. (Microbial infection) In CMV-infected cells, interacts with the viral glycoprotein UL16; this interaction causes ULBP1 retention in the endoplasmic reticulum and cis-Golgi and prevents binding to and activation of KLRK1/NKG2D, providing CMV with an immune evasion mechanism. As to expression, expressed in T-cells, B-cells, erythroleukemia cell lines and in a wide range of tissues including heart, brain, lung, liver, testis, lymph node, thymus, tonsil and bone marrow. Also found in fetal heart, brain, lung and liver.

Its subcellular location is the cell membrane. It localises to the endoplasmic reticulum. Functionally, binds and activates the KLRK1/NKG2D receptor, mediating natural killer cell cytotoxicity. The polypeptide is UL16-binding protein 1 (ULBP1) (Homo sapiens (Human)).